The following is a 382-amino-acid chain: Cholinephosphotransferase 1 (382 aa).

Residues 1–51 (MPQCECPEPLSAVQLKRLEEHKYSAAGRSLFEPPCQIYWNWLVQQIPTWVA) lie on the Cytoplasmic side of the membrane. The chain crosses the membrane as a helical span at residues 52-72 (PNTLTTIGLVINVITTVILVY). Asparagine 53 provides a ligand contact to CDP-choline. Topologically, residues 73 to 82 (YSPTATEEVP) are lumenal. Residues 83–107 (GWAFFLSALGLFIYQSLDAIDGKQA) form a helical membrane-spanning segment. 2 residues coordinate Mg(2+): aspartate 100 and aspartate 103. Position 108 (arginine 108) interacts with CDP-choline. Residues 108-114 (RRTNSSS) are Cytoplasmic-facing. Residues 115–139 (ALGELFDHGCDAVSTVFVAVGTCIC) form a helical membrane-spanning segment. Mg(2+) is bound at residue aspartate 121. Histidine 122 functions as the Proton acceptor in the catalytic mechanism. Aspartate 125 provides a ligand contact to Mg(2+). Over 140-149 (CGIGAYPNWM) the chain is Lumenal. A helical transmembrane segment spans residues 150-168 (FFCGFVGMFMFFCAHWQTY). The Cytoplasmic segment spans residues 169 to 179 (VSGTLRFGLVD). Residues 180–196 (VTEVQIAIIIMYLLTAF) form a helical membrane-spanning segment. The Lumenal segment spans residues 197–211 (TGVSFWEMRVPVLGV). A helical membrane pass occupies residues 212–237 (NLQTFPILGIIGGFLYSTYNYFFVIM). Residues 238 to 254 (NGGVGKNGSTVADTSVL) are Cytoplasmic-facing. Residues 255-270 (TPGLHIGLILTLAFII) traverse the membrane as a helical segment. Residues 271–282 (FKKSSSHLFEHH) lie on the Lumenal side of the membrane. A helical transmembrane segment spans residues 283–305 (PCLYVLTFGMVIAKISNKLVVAH). Topologically, residues 306-318 (MTKSELHLQDTAF) are cytoplasmic. A helical membrane pass occupies residues 319–328 (IGPGLLFLNQ). The Lumenal portion of the chain corresponds to 329-335 (YFNSYID). A helical membrane pass occupies residues 336 to 365 (EHIVLWIAMVLSLVDLVRYCTAVCLQIASH). The Cytoplasmic portion of the chain corresponds to 366–382 (LRIRVFSISPQGHAHKD).

The protein belongs to the CDP-alcohol phosphatidyltransferase class-I family. The cofactor is Mg(2+). It depends on Mn(2+) as a cofactor.

Its subcellular location is the golgi apparatus membrane. It carries out the reaction CDP-choline + a 1,2-diacyl-sn-glycerol = a 1,2-diacyl-sn-glycero-3-phosphocholine + CMP + H(+). It catalyses the reaction 1-octadecanoyl-2-(5Z,8Z,11Z,14Z-eicosatetraenoyl)-sn-glycerol + CDP-choline = 1-octadecanoyl-2-(5Z,8Z,11Z,14Z-eicosatetraenoyl)-sn-glycero-3-phosphocholine + CMP + H(+). The enzyme catalyses 1-hexadecanoyl-2-(9Z-octadecenoyl)-sn-glycerol + CDP-choline = 1-hexadecanoyl-2-(9Z-octadecenoyl)-sn-glycero-3-phosphocholine + CMP + H(+). The catalysed reaction is 1-hexadecanoyl-2-(4Z,7Z,10Z,13Z,16Z,19Z-docosahexaenoyl)-sn-glycerol + CDP-choline = 1-hexadecanoyl-2-(4Z,7Z,10Z,13Z,16Z,19Z-docosahexaenoyl)-sn-glycero-3-phosphocholine + CMP + H(+). It carries out the reaction 1,2-dioctanoyl-sn-glycerol + CDP-choline = 1,2-dioctanoyl-sn-glycero-3-phosphocholine + CMP + H(+). Its pathway is phospholipid metabolism; phosphatidylcholine biosynthesis; phosphatidylcholine from phosphocholine: step 2/2. Its function is as follows. Catalyzes the final step of de novo phosphatidylcholine (PC) synthesis, i.e. the transfer of choline phosphate from CDP-choline to the free hydroxyl of a diacylglycerol (DAG), producing a PC. It thereby plays a central role in the formation and maintenance of vesicular membranes. The polypeptide is Cholinephosphotransferase 1 (chpt1) (Danio rerio (Zebrafish)).